The sequence spans 202 residues: Methylthioribulose-1-phosphate dehydratase (202 aa).

Residues His-93 and His-95 each coordinate Zn(2+).

Belongs to the aldolase class II family. MtnB subfamily. The cofactor is Zn(2+).

The enzyme catalyses 5-(methylsulfanyl)-D-ribulose 1-phosphate = 5-methylsulfanyl-2,3-dioxopentyl phosphate + H2O. It participates in amino-acid biosynthesis; L-methionine biosynthesis via salvage pathway; L-methionine from S-methyl-5-thio-alpha-D-ribose 1-phosphate: step 2/6. Functionally, catalyzes the dehydration of methylthioribulose-1-phosphate (MTRu-1-P) into 2,3-diketo-5-methylthiopentyl-1-phosphate (DK-MTP-1-P). The protein is Methylthioribulose-1-phosphate dehydratase of Klebsiella pneumoniae (strain 342).